A 283-amino-acid polypeptide reads, in one-letter code: Pantothenate synthetase (283 aa).

Residue 30-37 coordinates ATP; that stretch reads MGFLHEGH. The Proton donor role is filled by His37. Gln61 is a (R)-pantoate binding site. Residue Gln61 coordinates beta-alanine. Residue 147–150 coordinates ATP; it reads GKKD. A (R)-pantoate-binding site is contributed by Gln153. ATP is bound by residues Val176 and 184–187; that span reads MSSR.

The protein belongs to the pantothenate synthetase family. Homodimer.

Its subcellular location is the cytoplasm. It catalyses the reaction (R)-pantoate + beta-alanine + ATP = (R)-pantothenate + AMP + diphosphate + H(+). The protein operates within cofactor biosynthesis; (R)-pantothenate biosynthesis; (R)-pantothenate from (R)-pantoate and beta-alanine: step 1/1. Catalyzes the condensation of pantoate with beta-alanine in an ATP-dependent reaction via a pantoyl-adenylate intermediate. The sequence is that of Pantothenate synthetase from Trichlorobacter lovleyi (strain ATCC BAA-1151 / DSM 17278 / SZ) (Geobacter lovleyi).